We begin with the raw amino-acid sequence, 426 residues long: Histidine--tRNA ligase (426 aa).

Belongs to the class-II aminoacyl-tRNA synthetase family. In terms of assembly, homodimer.

The protein resides in the cytoplasm. It carries out the reaction tRNA(His) + L-histidine + ATP = L-histidyl-tRNA(His) + AMP + diphosphate + H(+). The sequence is that of Histidine--tRNA ligase from Streptococcus equi subsp. zooepidemicus (strain H70).